The primary structure comprises 521 residues: MFLIEKRRKLIQKKANYHSDPTTVFNHLCGSRPATLLLETAEVNKKNNLESIMIVDSAIRVSAVKNSVKITALSENGAEILSILKENPHKKIKFFEKNKSINLIFPSLDNNLDEDKKIFSLSVFDSFRFIMKSVNNTKRTSKAMFFGGLFSYDLISNFESLPNVKKKQKCPDFCFYLAETLLVVDHQKKTCLIQSSLFGRNVDEKNRIKKRTEEIEKKLEEKLTSIPKNKTTVPVQLTSNISDFQYSSTIKKLQKLIQKGEIFQVVPSRKFFLPCDNSLSAYQELKKSNPSPYMFFMQDEDFILFGASPESSLKYDEKNRQIELYPIAGTRPRGRKKDGTLDLDLDSRIELEMRTNHKELAEHLMLVDLARNDLARICEPGSRYVSDLVKVDKYSHVMHLVSKVVGQLKYGLDALHAYSSCMNMGTLTGAPKVRAMQLIAEYEGEGRGSYGGAIGYFTDLGNLDTCITIRSAYVESGVATIQAGAGVVFNSIPEDEVKESLNKAQAVINAIKKAHFTMGSS.

Residues threonine 40 and 292 to 294 (PYM) each bind L-tryptophan. 329–330 (GT) is a binding site for chorismate. Glutamate 362 lines the Mg(2+) pocket. Residues tyrosine 450, arginine 470, 484–486 (GAG), and glycine 486 contribute to the chorismate site. Glutamate 499 serves as a coordination point for Mg(2+).

It belongs to the anthranilate synthase component I family. As to quaternary structure, heterotetramer consisting of two non-identical subunits: a beta subunit (TrpG) and a large alpha subunit (TrpE). The cofactor is Mg(2+).

It catalyses the reaction chorismate + L-glutamine = anthranilate + pyruvate + L-glutamate + H(+). It functions in the pathway amino-acid biosynthesis; L-tryptophan biosynthesis; L-tryptophan from chorismate: step 1/5. Its activity is regulated as follows. Feedback inhibited by tryptophan. Part of a heterotetrameric complex that catalyzes the two-step biosynthesis of anthranilate, an intermediate in the biosynthesis of L-tryptophan. In the first step, the glutamine-binding beta subunit (TrpG) of anthranilate synthase (AS) provides the glutamine amidotransferase activity which generates ammonia as a substrate that, along with chorismate, is used in the second step, catalyzed by the large alpha subunit of AS (TrpE) to produce anthranilate. In the absence of TrpG, TrpE can synthesize anthranilate directly from chorismate and high concentrations of ammonia. The polypeptide is Anthranilate synthase component 1 (trpE) (Buchnera aphidicola subsp. Acyrthosiphon pisum (strain APS) (Acyrthosiphon pisum symbiotic bacterium)).